The sequence spans 483 residues: Betaine aldehyde dehydrogenase (483 aa).

K(+) is bound by residues isoleucine 27 and aspartate 93. 149 to 151 (GAW) contributes to the NAD(+) binding site. The active-site Charge relay system is the lysine 161. 175–178 (KPSE) serves as a coordination point for NAD(+). Valine 179 is a binding site for K(+). 228-231 (SVPT) contributes to the NAD(+) binding site. Valine 243 is a K(+) binding site. Glutamate 249 functions as the Proton acceptor in the catalytic mechanism. Residues glycine 251, cysteine 283, and glutamate 380 each coordinate NAD(+). Cysteine 283 serves as the catalytic Nucleophile. Cysteine 283 carries the cysteine sulfenic acid (-SOH) modification. K(+) is bound by residues lysine 450 and glycine 453. Glutamate 457 functions as the Charge relay system in the catalytic mechanism.

It belongs to the aldehyde dehydrogenase family. As to quaternary structure, dimer of dimers. Requires K(+) as cofactor.

It catalyses the reaction betaine aldehyde + NAD(+) + H2O = glycine betaine + NADH + 2 H(+). Its pathway is amine and polyamine biosynthesis; betaine biosynthesis via choline pathway; betaine from betaine aldehyde: step 1/1. Its function is as follows. Involved in the biosynthesis of the osmoprotectant glycine betaine. Catalyzes the irreversible oxidation of betaine aldehyde to the corresponding acid. In Cereibacter sphaeroides (strain ATCC 17029 / ATH 2.4.9) (Rhodobacter sphaeroides), this protein is Betaine aldehyde dehydrogenase.